Consider the following 292-residue polypeptide: Sulfofructosephosphate aldolase (292 aa).

The Schiff-base intermediate with substrate role is filled by Lys193.

Belongs to the aldolase LacD family. Homotetramer.

The enzyme catalyses 6-deoxy-6-sulfo-D-fructose 1-phosphate = (2S)-3-sulfolactaldehyde + dihydroxyacetone phosphate. In terms of biological role, cleaves 6-deoxy-6-sulfo-D-fructose 1-phosphate (SFP) to form dihydroxyacetone phosphate (DHAP) and 3-sulfolactaldehyde (SLA). The chain is Sulfofructosephosphate aldolase (yihT) from Escherichia coli (strain K12).